The primary structure comprises 184 residues: Type-1 fimbrial protein, A chain (184 aa).

An N-terminal signal peptide occupies residues 1 to 22 (MKHKLMTSTIASLMFVAGAAVA). Cysteine 46 and cysteine 86 are oxidised to a cystine.

This sequence belongs to the fimbrial protein family.

Its subcellular location is the fimbrium. Its function is as follows. Fimbriae (also called pili), polar filaments radiating from the surface of the bacterium to a length of 0.5-1.5 micrometers and numbering 100-300 per cell, enable bacteria to colonize the epithelium of specific host organs. The chain is Type-1 fimbrial protein, A chain (fimA) from Salmonella typhi.